A 379-amino-acid chain; its full sequence is Putative cyclic ADP-D-ribose synthase TIR2 (379 aa).

Positions 254–379 (KVYDVFISHS…TISWTTGLVK (126 aa)) constitute a TIR domain. Glu335 is an active-site residue.

As to quaternary structure, homodimer.

It is found in the cytoplasm. With respect to regulation, activated upon phage infection. In terms of biological role, one of 2 TIR-like protein components of the Thoeris antiviral defense system, composed of ThsA, TIR1 (thsB1) and TIR2 (thsB2). Phage infection activates this protein; by 70 minutes post-infection with phage SPO1, TIR2 generates a signal molecule that in turn activates the NAD(+) hydrolase activity of ThsA (tested with B.cereus). The signal is similar to cyclic ADP-D-ribose, but how it differs is unknown. Expression of Thoeris in B.subtilis (strain BEST7003) confers resistance to phages phi29, phi3T, SPBeta, SBSphi11, SBSphi13, SBSphiJ, SPO1 and SPR but not SBSphiC. The TIR paralogs confer resistance to different phages; this subunit confers resistance to phi3T, SPBeta, SBSphi13, SBSphiJ, SPO1 and SPR but not phi29, SBSphi11 or SBSphiC. There is overlap in the phage range for this system, both TIR1 and TIR2 are activated by SBSphi13, SBSphiJ, SPO1 and SPR. Probably hydrolyzes NAD(+) to make a cyclic ADP-D-ribose (cADPR) signaling molecule; might make 3'cADPR. The polypeptide is Putative cyclic ADP-D-ribose synthase TIR2 (Cytobacillus dafuensis (Bacillus dafuensis)).